The chain runs to 675 residues: Protein PALS1 (675 aa).

2 disordered regions span residues 1 to 34 (MTTS…KHRE) and 51 to 78 (RRSA…KKQE). The tract at residues 1–345 (MTTSHMNGHV…QQIKPPPAKE (345 aa)) is required for the correct localization of PALS1 and PATJ at cell-cell contacts and the normal formation of tight junctions and adherens junctions. Composition is skewed to basic and acidic residues over residues 10–34 (VTEE…KHRE) and 54–78 (AQLE…KKQE). 2 positions are modified to phosphoserine: S14 and S25. Positions 21-140 (VDLASPEEHQ…LKHIQHTLVD (120 aa)) are interaction with PARD6B. Residues S83 and S84 each carry the phosphoserine modification. L27 domains lie at 120–177 (KILE…NKAS) and 179–235 (PFPL…MQLE). Positions 181–243 (PLISNAQDLA…LEPITDERVY (63 aa)) are interaction with LIN7C. The PDZ domain occupies 256–336 (IVRIEKARDI…TLTFVLIPSQ (81 aa)). In terms of domain architecture, SH3 spans 345–417 (ETVIHVKAHF…PGKSFQQQRE (73 aa)). One can recognise a Guanylate kinase-like domain in the interval 479–660 (KRPIILIGPQ…AYQELLRLIN (182 aa)). ATP is bound at residue 486 to 493 (GPQNCGQN).

Belongs to the MAGUK family. As to quaternary structure, heterodimer with MPP1. Forms a heterotrimeric complex composed of PALS1, LIN7B and PATJ; the N-terminal L27 domain of PALS1 interacts with the L27 domain of PATJ and the C-terminal L27 domain of PALS1 interacts with the L27 domain of LIN7B. Component of a complex composed of PALS1, CRB1 and MPP4. Component of a complex whose core is composed of ARHGAP17, AMOT, PALS1, PATJ and PARD3/PAR3. Component of a complex composed of PALS1, CRB1 and EPB41L5. Within the complex, interacts (via HOOK domain) with EPB41L5 (via FERM domain), and interacts with CRB1 (via intracellular domain). Component of a complex composed of PALS1, MPP3 and CRB1; PALS1 acts as a bridging protein between MPP3 (via guanylate kinase-like domain) and CRB1. Component of a complex composed of CRB3, PALS1 and PATJ. As part of the Crumbs complex; interacts with WWP1, the interaction is enhanced by AMOTL2 and facilitates WWP1 localization to the plasma membrane. The Crumbs complex promotes monoubiquitination of AMOTL2 by WWP1, which activates the Hippo signaling pathway. Interacts (via PDZ domain) with PATJ (via N-terminus). Interacts with EZR. Interacts (via PDZ domain) with CRB1 (via C-terminal ERLI motif). While the PDZ domain is sufficient for interaction with CRB1, the adjacent SH3 and guanylate kinase-like domains are likely to contribute to a high affinity interaction. Interacts with WWTR1/TAZ (via WW domain). Interacts with MPP7. Interacts (via PDZ domain) with CRB3 (via C-terminus). Interacts with LIN7C. Interacts with MPDZ. Interacts with PARD6B. Interacts with SC6A1. Interacts with CDH5; the interaction promotes PALS1 localization to cell junctions and is required for CDH5-mediated vascular lumen formation and endothelial cell. Interacts with NPHP1 (via coiled coil and SH3 domains). Interacts with NPHP4. Interacts with CRB2. In terms of assembly, (Microbial infection) Interacts (via PDZ domain) with human coronaviruses SARS-CoV and, probably, SARS-CoV-2 envelope small membrane protein E (via C-terminus); this inhibits the interaction between PALS1 and CRB3. In terms of tissue distribution, expressed at the outer limiting membrane in the retina (at protein level). Expressed in T lymphocytes (at protein level). Expressed in the kidney (at protein level).

It localises to the golgi apparatus. The protein localises to the cell membrane. The protein resides in the endomembrane system. Its subcellular location is the cell junction. It is found in the tight junction. It localises to the adherens junction. The protein localises to the cell projection. The protein resides in the axon. Its subcellular location is the perikaryon. It is found in the apical cell membrane. It localises to the endoplasmic reticulum-Golgi intermediate compartment. Its function is as follows. Plays a role in tight junction biogenesis and in the establishment of cell polarity in epithelial cells. Also involved in adherens junction biogenesis by ensuring correct localization of the exocyst complex protein EXOC4/SEC8 which allows trafficking of adherens junction structural component CDH1 to the cell surface. Plays a role through its interaction with CDH5 in vascular lumen formation and endothelial membrane polarity. Required during embryonic and postnatal retinal development. Required for the maintenance of cerebellar progenitor cells in an undifferentiated proliferative state, preventing premature differentiation, and is required for cerebellar histogenesis, fissure formation, cerebellar layer organization and cortical development. Plays a role in neuronal progenitor cell survival, potentially via promotion of mTOR signaling. Plays a role in the radial and longitudinal extension of the myelin sheath in Schwann cells. May modulate SC6A1/GAT1-mediated GABA uptake by stabilizing the transporter. Plays a role in the T-cell receptor-mediated activation of NF-kappa-B. Required for localization of EZR to the apical membrane of parietal cells and may play a role in the dynamic remodeling of the apical cytoskeleton. Required for the normal polarized localization of the vesicular marker STX4. Required for the correct trafficking of the myelin proteins PMP22 and MAG. Involved in promoting phosphorylation and cytoplasmic retention of transcriptional coactivators YAP1 and WWTR1/TAZ which leads to suppression of TGFB1-dependent transcription of target genes such as CCN2/CTGF, SERPINE1/PAI1, SNAI1/SNAIL1 and SMAD7. (Microbial infection) Acts as an interaction partner for human coronaviruses SARS-CoV and, probably, SARS-CoV-2 envelope protein E which results in delayed formation of tight junctions and disregulation of cell polarity. The polypeptide is Protein PALS1 (Homo sapiens (Human)).